Here is a 232-residue protein sequence, read N- to C-terminus: Flagellar L-ring protein (232 aa).

Residues 1–21 form the signal peptide; the sequence is MQKNAAHTYAISSLLVLSLTG. Residue cysteine 22 is the site of N-palmitoyl cysteine attachment. Residue cysteine 22 is the site of S-diacylglycerol cysteine attachment.

The protein belongs to the FlgH family. As to quaternary structure, the basal body constitutes a major portion of the flagellar organelle and consists of four rings (L,P,S, and M) mounted on a central rod.

It is found in the cell outer membrane. Its subcellular location is the bacterial flagellum basal body. In terms of biological role, assembles around the rod to form the L-ring and probably protects the motor/basal body from shearing forces during rotation. The sequence is that of Flagellar L-ring protein from Shigella boydii serotype 4 (strain Sb227).